The primary structure comprises 274 residues: Lipoprotein E (274 aa).

The N-terminal stretch at 1-20 is a signal peptide; it reads MKTTLKMTALAALSAFVLAG. The N-palmitoyl cysteine moiety is linked to residue Cys21. Cys21 is lipidated: S-diacylglycerol cysteine.

The protein localises to the cell outer membrane. This is Lipoprotein E (hel) from Haemophilus influenzae (strain ATCC 51907 / DSM 11121 / KW20 / Rd).